The sequence spans 505 residues: NADH-quinone oxidoreductase subunit N (505 aa).

Helical transmembrane passes span 20 to 40, 59 to 79, 83 to 103, 115 to 135, 137 to 157, 172 to 192, 220 to 240, 251 to 271, 285 to 305, 314 to 334, 342 to 362, 394 to 414, 431 to 451, and 481 to 501; these read ALAP…GDLF, ALAL…GGVF, GLAA…ALMS, GEYY…VSAG, AIVL…LVAL, FLMG…LYGL, AVVA…TVPF, APTT…FAVL, LWSD…NIAA, MLAY…AACT, AAYL…IIYL, LAAV…TAGF, ITVV…LGVA, and AVCL…LFWI.

The protein belongs to the complex I subunit 2 family. NDH-1 is composed of 14 different subunits. Subunits NuoA, H, J, K, L, M, N constitute the membrane sector of the complex.

It is found in the cell inner membrane. The enzyme catalyses a quinone + NADH + 5 H(+)(in) = a quinol + NAD(+) + 4 H(+)(out). Its function is as follows. NDH-1 shuttles electrons from NADH, via FMN and iron-sulfur (Fe-S) centers, to quinones in the respiratory chain. The immediate electron acceptor for the enzyme in this species is believed to be ubiquinone. Couples the redox reaction to proton translocation (for every two electrons transferred, four hydrogen ions are translocated across the cytoplasmic membrane), and thus conserves the redox energy in a proton gradient. The sequence is that of NADH-quinone oxidoreductase subunit N from Desulfovibrio desulfuricans (strain ATCC 27774 / DSM 6949 / MB).